The sequence spans 130 residues: Small ribosomal subunit protein eS8 (130 aa).

It belongs to the eukaryotic ribosomal protein eS8 family. As to quaternary structure, part of the 30S ribosomal subunit.

The chain is Small ribosomal subunit protein eS8 from Thermococcus gammatolerans (strain DSM 15229 / JCM 11827 / EJ3).